Here is a 199-residue protein sequence, read N- to C-terminus: uncharacterized protein (199 aa).

This is an uncharacterized protein from Shigella flexneri.